Here is a 240-residue protein sequence, read N- to C-terminus: Inhibitor of growth protein 5 (240 aa).

Residue K114 is modified to N6-acetyllysine. Residues 116–165 (EGSDFESSGGRGLKKGRGQKEKRGSRGRGRRTSEEDTPKKKKHKGGSEFT) form a disordered region. S118 carries the phosphoserine modification. At R126 the chain carries Omega-N-methylarginine. A PHD-type zinc finger spans residues 186-235 (PTYCLCHQVSYGEMIGCDNPDCPIEWFHFACVDLTTKPKGKWFCPRCVQE). Zn(2+)-binding residues include C189, C191, C202, C207, H213, C216, C229, and C232.

Belongs to the ING family. In terms of assembly, component of the HBO1 complex composed of KAT7/HBO1, MEAF6, ING5, and one scaffold subunit: complexes containing BRPF scaffold (BRPF1, BRD1/BRPF2 or BRPF3) direct KAT7/HBO1 specificity towards H3K14ac, while complexes containing JADE scaffold (JADE1, JADE2 and JADE3) mediate acetylation of histone H4. Component of the MOZ/MORF complex composed at least of ING5, KAT6A, KAT6B, MEAF6 and one of BRPF1, BRD1/BRPF2 and BRPF3. Interacts with H3K4me3 and to a lesser extent with H3K4me2. Interacts with EP300 and p53/TP53. Interacts with INCA1. As to expression, down-regulated in bone marrow cells in acute myeloid leukemia patients as compared with normal bone marrow cells.

Its subcellular location is the nucleus. The protein resides in the chromosome. Functionally, component of the HBO1 complex, which specifically mediates acetylation of histone H3 at 'Lys-14' (H3K14ac) and, to a lower extent, acetylation of histone H4. Component of the MOZ/MORF complex which has a histone H3 acetyltransferase activity. Through chromatin acetylation it may regulate DNA replication and may function as a transcriptional coactivator. Inhibits cell growth, induces a delay in S-phase progression and enhances Fas-induced apoptosis in an INCA1-dependent manner. The protein is Inhibitor of growth protein 5 (ING5) of Homo sapiens (Human).